The sequence spans 80 residues: Omega-conotoxin-like 2/7 (80 aa).

The N-terminal stretch at 1 to 22 is a signal peptide; it reads MKLTCMMIVAVMFLTASIFITA. Residues 23–51 constitute a propeptide that is removed on maturation; sequence DNSRNGIENLPRMRRHEMKKPKASKLNKR. 3 cysteine pairs are disulfide-bonded: cysteine 53/cysteine 71, cysteine 60/cysteine 75, and cysteine 70/cysteine 79.

This sequence belongs to the conotoxin O1 superfamily. As to expression, expressed by the venom duct.

The protein resides in the secreted. Its function is as follows. Omega-conotoxins act at presynaptic membranes, they bind and block voltage-gated calcium channels (Cav). The sequence is that of Omega-conotoxin-like 2/7 from Conus imperialis (Imperial cone).